The following is a 446-amino-acid chain: Phosphoglucosamine mutase (446 aa).

Ser-99 (phosphoserine intermediate) is an active-site residue. Mg(2+)-binding residues include Ser-99, Asp-242, Asp-244, and Asp-246. Ser-99 carries the post-translational modification Phosphoserine.

It belongs to the phosphohexose mutase family. The cofactor is Mg(2+). Activated by phosphorylation.

The enzyme catalyses alpha-D-glucosamine 1-phosphate = D-glucosamine 6-phosphate. In terms of biological role, catalyzes the conversion of glucosamine-6-phosphate to glucosamine-1-phosphate. The polypeptide is Phosphoglucosamine mutase (Campylobacter hominis (strain ATCC BAA-381 / DSM 21671 / CCUG 45161 / LMG 19568 / NCTC 13146 / CH001A)).